Reading from the N-terminus, the 341-residue chain is Holliday junction branch migration complex subunit RuvB (341 aa).

The tract at residues 3–184 (DDFDIRDARM…FGINMHLEYY (182 aa)) is large ATPase domain (RuvB-L). ATP contacts are provided by residues Leu23, Arg24, Gly65, Lys68, Thr69, Thr70, 131–133 (EDY), Arg174, Tyr184, and Arg221. Thr69 contributes to the Mg(2+) binding site. A small ATPAse domain (RuvB-S) region spans residues 185 to 255 (DMETLTKIVL…IACFSLEALN (71 aa)). The interval 258-341 (RYGLDQIDNK…RVGEQGFLFD (84 aa)) is head domain (RuvB-H). 2 residues coordinate DNA: Arg313 and Arg318.

It belongs to the RuvB family. In terms of assembly, homohexamer. Forms an RuvA(8)-RuvB(12)-Holliday junction (HJ) complex. HJ DNA is sandwiched between 2 RuvA tetramers; dsDNA enters through RuvA and exits via RuvB. An RuvB hexamer assembles on each DNA strand where it exits the tetramer. Each RuvB hexamer is contacted by two RuvA subunits (via domain III) on 2 adjacent RuvB subunits; this complex drives branch migration. In the full resolvosome a probable DNA-RuvA(4)-RuvB(12)-RuvC(2) complex forms which resolves the HJ.

It localises to the cytoplasm. It catalyses the reaction ATP + H2O = ADP + phosphate + H(+). Functionally, the RuvA-RuvB-RuvC complex processes Holliday junction (HJ) DNA during genetic recombination and DNA repair, while the RuvA-RuvB complex plays an important role in the rescue of blocked DNA replication forks via replication fork reversal (RFR). RuvA specifically binds to HJ cruciform DNA, conferring on it an open structure. The RuvB hexamer acts as an ATP-dependent pump, pulling dsDNA into and through the RuvAB complex. RuvB forms 2 homohexamers on either side of HJ DNA bound by 1 or 2 RuvA tetramers; 4 subunits per hexamer contact DNA at a time. Coordinated motions by a converter formed by DNA-disengaged RuvB subunits stimulates ATP hydrolysis and nucleotide exchange. Immobilization of the converter enables RuvB to convert the ATP-contained energy into a lever motion, pulling 2 nucleotides of DNA out of the RuvA tetramer per ATP hydrolyzed, thus driving DNA branch migration. The RuvB motors rotate together with the DNA substrate, which together with the progressing nucleotide cycle form the mechanistic basis for DNA recombination by continuous HJ branch migration. Branch migration allows RuvC to scan DNA until it finds its consensus sequence, where it cleaves and resolves cruciform DNA. This is Holliday junction branch migration complex subunit RuvB from Parabacteroides distasonis (strain ATCC 8503 / DSM 20701 / CIP 104284 / JCM 5825 / NCTC 11152).